The chain runs to 338 residues: Phenylalanine--tRNA ligase alpha subunit (338 aa).

A Mg(2+)-binding site is contributed by glutamate 252.

It belongs to the class-II aminoacyl-tRNA synthetase family. Phe-tRNA synthetase alpha subunit type 1 subfamily. Tetramer of two alpha and two beta subunits. Mg(2+) is required as a cofactor.

It localises to the cytoplasm. It catalyses the reaction tRNA(Phe) + L-phenylalanine + ATP = L-phenylalanyl-tRNA(Phe) + AMP + diphosphate + H(+). In Azotobacter vinelandii (strain DJ / ATCC BAA-1303), this protein is Phenylalanine--tRNA ligase alpha subunit.